The primary structure comprises 112 residues: MRHYEIMFLVHPDQSEQVPGMVERYEGIITKHNGKIHRKEDLGRRQLAYSINKVHKAHYILMNVECNLDALNEIKNAFKFNDAILRHLITVQKQAITTESVLMKKEKETKVA.

It belongs to the bacterial ribosomal protein bS6 family.

In terms of biological role, binds together with bS18 to 16S ribosomal RNA. The protein is Small ribosomal subunit protein bS6 of Legionella pneumophila (strain Paris).